We begin with the raw amino-acid sequence, 514 residues long: ATP synthase subunit alpha (514 aa).

Position 170 to 177 (170 to 177 (GDRQIGKT)) interacts with ATP.

This sequence belongs to the ATPase alpha/beta chains family. F-type ATPases have 2 components, CF(1) - the catalytic core - and CF(0) - the membrane proton channel. CF(1) has five subunits: alpha(3), beta(3), gamma(1), delta(1), epsilon(1). CF(0) has three main subunits: a(1), b(2) and c(9-12). The alpha and beta chains form an alternating ring which encloses part of the gamma chain. CF(1) is attached to CF(0) by a central stalk formed by the gamma and epsilon chains, while a peripheral stalk is formed by the delta and b chains.

Its subcellular location is the cell inner membrane. It catalyses the reaction ATP + H2O + 4 H(+)(in) = ADP + phosphate + 5 H(+)(out). Produces ATP from ADP in the presence of a proton gradient across the membrane. The alpha chain is a regulatory subunit. This Pseudomonas syringae pv. tomato (strain ATCC BAA-871 / DC3000) protein is ATP synthase subunit alpha.